We begin with the raw amino-acid sequence, 399 residues long: Transcription termination factor 1, mitochondrial (399 aa).

Residues 1-57 constitute a mitochondrion transit peptide; sequence MQSLSLGQTSISKGLNYLTIMAPGNLWHMRNNFLFGSRCWMTRFSAENIFKSVSFRL. Interaction with DNA stretches follow at residues 169–170, 247–251, 324–331, 355–358, and 384–391; these read RS, QSTKR, AEKKFNDK, SIST, and SKKRYEAK.

The protein belongs to the mTERF family. In terms of assembly, monomer. Post-translationally, phosphoprotein with mostly four phosphate groups. While the DNA-binding activity is unaffected by the phosphorylation state, only the phosphorylated form of the protein is active for termination activity. Functioning seems to be regulated by phosphorylation.

It is found in the mitochondrion. Functionally, transcription termination factor. Binds to a 28 bp region within the tRNA(Leu(uur)) gene at a position immediately adjacent to and downstream of the 16S rRNA gene; this region comprises a tridecamer sequence critical for directing accurate termination. Binds DNA along the major grove and promotes DNA bending and partial unwinding. Promotes base flipping. Transcription termination activity appears to be polarized with highest specificity for transcripts initiated on the light strand. The sequence is that of Transcription termination factor 1, mitochondrial (MTERF1) from Homo sapiens (Human).